The primary structure comprises 178 residues: Long polar fimbria protein A (178 aa).

The N-terminal stretch at 1–24 (MEFLMKKVVFALSALAVVSTSAFA) is a signal peptide.

The protein belongs to the fimbrial protein family.

Its subcellular location is the fimbrium. The sequence is that of Long polar fimbria protein A (lpfA) from Salmonella typhimurium (strain LT2 / SGSC1412 / ATCC 700720).